Reading from the N-terminus, the 376-residue chain is MEVPRLDHALNSPTSPCEEVIKNLSLEAIQLCDRDGNKSQDSGIAEMEELPVPHNIKISNITCDSFKISWEMDSKSKDRITHYFIDLNKKENKNSNKFKHKDVPTKLVAKAVPLPMTVRGHWFLSPRTEYTVAVQTASKQVDGDYVVSEWSEIIEFCTADYSKVHLTQLLEKAEVIAGRMLKFSVFYRNQHKEYFDYVREHHGNAMQPSVKDNSGSHGSPISGKLEGIFFSCSTEFNTGKPPQDSPYGRYRFEIAAEKLFNPNTNLYFGDFYCMYTAYHYVILVIAPVGSPGDEFCKQRLPQLNSKDNKFLTCTEEDGVLVYHHAQDVILEVIYTDPVDLSVGTVAEITGHQLMSLSTANAKKDPSCKTCNISVGR.

Ser12 and Ser15 each carry phosphoserine. The N-linked (GlcNAc...) asparagine glycan is linked to Asn23. Residue Ser25 is modified to Phosphoserine. Asn37 carries an N-linked (GlcNAc...) asparagine glycan. Positions 52–161 constitute a Fibronectin type-III domain; it reads VPHNIKISNI…EIIEFCTADY (110 aa).

This sequence belongs to the PHYHIP family.

Its function is as follows. May play a role in the development of the central system. In Homo sapiens (Human), this protein is Phytanoyl-CoA hydroxylase-interacting protein-like (PHYHIPL).